A 199-amino-acid chain; its full sequence is V-type proton ATPase subunit E (199 aa).

Belongs to the V-ATPase E subunit family.

Functionally, produces ATP from ADP in the presence of a proton gradient across the membrane. The protein is V-type proton ATPase subunit E of Clostridium botulinum (strain Okra / Type B1).